Reading from the N-terminus, the 400-residue chain is Signal recognition particle receptor FtsY (400 aa).

Disordered regions lie at residues 12–37 and 51–86; these read TKKT…QEEQ and NKIK…KDKK. Basic and acidic residues predominate over residues 51 to 72; that stretch reads NKIKKTKTSETKKQEKPIETLK. Residues 192-199, 278-282, and 342-345 contribute to the GTP site; these read GVNGTGKT, DTAGR, and TKMD.

This sequence belongs to the GTP-binding SRP family. FtsY subfamily. As to quaternary structure, part of the signal recognition particle protein translocation system, which is composed of SRP and FtsY.

It is found in the cell membrane. Its subcellular location is the cytoplasm. The catalysed reaction is GTP + H2O = GDP + phosphate + H(+). Involved in targeting and insertion of nascent membrane proteins into the cytoplasmic membrane. Acts as a receptor for the complex formed by the signal recognition particle (SRP) and the ribosome-nascent chain (RNC). The protein is Signal recognition particle receptor FtsY of Mycoplasma mycoides subsp. mycoides SC (strain CCUG 32753 / NCTC 10114 / PG1).